The primary structure comprises 490 residues: Subtilisin-like protease 8 (490 aa).

Residues 1 to 26 (MKGLLSLSVLPVLAYASPMIVDSIHQ) form the signal peptide. A propeptide spanning residues 27 to 134 (DAAPILSSTN…YIERDSEVRA (108 aa)) is cleaved from the precursor. In terms of domain architecture, Inhibitor I9 spans 43-133 (SYIVVFKKGV…EYIERDSEVR (91 aa)). Residues 144–450 (PWGLARISHR…GGSDNYKEIV (307 aa)) enclose the Peptidase S8 domain. Catalysis depends on charge relay system residues aspartate 180 and histidine 212. A glycan (N-linked (GlcNAc...) asparagine) is linked at asparagine 282. Serine 378 functions as the Charge relay system in the catalytic mechanism. The N-linked (GlcNAc...) asparagine glycan is linked to asparagine 455.

The protein belongs to the peptidase S8 family.

It is found in the secreted. Secreted subtilisin-like serine protease with keratinolytic activity that contributes to pathogenicity. The polypeptide is Subtilisin-like protease 8 (SUB8) (Arthroderma otae (strain ATCC MYA-4605 / CBS 113480) (Microsporum canis)).